The following is a 103-amino-acid chain: Sec-independent protein translocase protein TatA (103 aa).

A helical membrane pass occupies residues 1 to 21 (MSLGPWEIAIIVLLIIVLFGA). The disordered stretch occupies residues 42-103 (VKEMQKDDET…QNYEDPNRTP (62 aa)). Residues 52-90 (PAQPEQQPQGYQHPQQIEAPQNLQQPNFQQHYQNQPQQP) show a composition bias toward low complexity. Residues 94 to 103 (QNYEDPNRTP) are compositionally biased toward basic and acidic residues.

It belongs to the TatA/E family. The Tat system comprises two distinct complexes: a TatABC complex, containing multiple copies of TatA, TatB and TatC subunits, and a separate TatA complex, containing only TatA subunits. Substrates initially bind to the TatABC complex, which probably triggers association of the separate TatA complex to form the active translocon.

It localises to the cell membrane. Part of the twin-arginine translocation (Tat) system that transports large folded proteins containing a characteristic twin-arginine motif in their signal peptide across membranes. TatA could form the protein-conducting channel of the Tat system. The chain is Sec-independent protein translocase protein TatA from Corynebacterium efficiens (strain DSM 44549 / YS-314 / AJ 12310 / JCM 11189 / NBRC 100395).